A 400-amino-acid polypeptide reads, in one-letter code: Elongation factor Tu (400 aa).

The region spanning 10-210 (KPHINVGTIG…ALDEYIPEPK (201 aa)) is the tr-type G domain. A G1 region spans residues 19–26 (GHVDHGKT). GTP is bound at residue 19–26 (GHVDHGKT). Residue Thr26 participates in Mg(2+) binding. Positions 64 to 68 (GITIA) are G2. Residues 85 to 88 (DCPG) are G3. Residues 85-89 (DCPGH) and 140-143 (NKAD) each bind GTP. The segment at 140–143 (NKAD) is G4. Residues 178–180 (SAL) are G5.

It belongs to the TRAFAC class translation factor GTPase superfamily. Classic translation factor GTPase family. EF-Tu/EF-1A subfamily. Monomer.

The protein resides in the cytoplasm. The enzyme catalyses GTP + H2O = GDP + phosphate + H(+). In terms of biological role, GTP hydrolase that promotes the GTP-dependent binding of aminoacyl-tRNA to the A-site of ribosomes during protein biosynthesis. This Rubrobacter xylanophilus (strain DSM 9941 / JCM 11954 / NBRC 16129 / PRD-1) protein is Elongation factor Tu.